A 196-amino-acid chain; its full sequence is MSERKRELAEEASSTSFSPLKKTKLNDSSDSSPDSHDVIVFAVSSSSVASSAALASDECSVTIGGEESDQSSSISSGCFTSESKEIAKNSSSFGVDLEDHQIETETETSTFITSNFRKETSPVSEGLGETTTEMESSSATKRKQPGVRKTPTAAEIEDLFSELESQDDKKKQFIEKYNFDIVNDEPLEGRYKWDRL.

2 disordered regions span residues 1–36 (MSER…PDSH) and 55–151 (ASDE…RKTP). Positions 124 to 139 (SEGLGETTTEMESSSA) are enriched in low complexity. Phosphothreonine; by KIN10 is present on T152.

It belongs to the CDI family. ICK/KRP subfamily. In terms of assembly, specifically interacts with CDKA-1, but not with CDKB1-1. Interacts with CYCD1-1, CYCD4-1 and RHF1A. Binds to FBL17. Interacts with KIN10. Interacts with CYCD3-1. Post-translationally, ubiquitinated by RHF1A and SCF(FBL17). Ubiquitination leads to its subsequent degradation, thus controlling cell cycle progression. In terms of processing, the phosphorylation at Thr-152 by KIN10 represses its activity. In terms of tissue distribution, expressed in newly formed organs such as the shoot apex. Expressed in cotyledon, primary root and marginal region of the leaves as well as in developing pollen.

The protein resides in the nucleus. The protein localises to the nucleoplasm. Its activity is regulated as follows. Down-regulated by KIN10 under a phosphorylation-dependent manner. Functionally, binds and inhibits CYCD2-1/CDKA-1 complex kinase activity. Regulates cell division which is crucial for plant growth, development and morphogenesis. May inhibit CDK kinases specifically involved in the G1/S phase transition. The protein is Cyclin-dependent kinase inhibitor 6 (KRP6) of Arabidopsis thaliana (Mouse-ear cress).